Here is a 256-residue protein sequence, read N- to C-terminus: Indole-3-glycerol phosphate synthase (256 aa).

This sequence belongs to the TrpC family.

It carries out the reaction 1-(2-carboxyphenylamino)-1-deoxy-D-ribulose 5-phosphate + H(+) = (1S,2R)-1-C-(indol-3-yl)glycerol 3-phosphate + CO2 + H2O. It functions in the pathway amino-acid biosynthesis; L-tryptophan biosynthesis; L-tryptophan from chorismate: step 4/5. The protein is Indole-3-glycerol phosphate synthase of Pelodictyon phaeoclathratiforme (strain DSM 5477 / BU-1).